The primary structure comprises 241 residues: uncharacterized protein (241 aa).

The next 6 membrane-spanning stretches (helical) occupy residues 1–21 (MMMA…GILL), 43–63 (FPII…LKNL), 75–95 (LPIY…FYAI), 108–128 (IYVL…VLML), 160–180 (VLTS…HGLL), and 200–220 (ILVI…IASG).

It to M.jannaschii MJ0871, MJ0880 and MJ1556.

The protein resides in the cell membrane. This is an uncharacterized protein from Methanocaldococcus jannaschii (strain ATCC 43067 / DSM 2661 / JAL-1 / JCM 10045 / NBRC 100440) (Methanococcus jannaschii).